A 303-amino-acid chain; its full sequence is Probable 5-dehydro-4-deoxyglucarate dehydratase (303 aa).

Belongs to the DapA family.

It catalyses the reaction 5-dehydro-4-deoxy-D-glucarate + H(+) = 2,5-dioxopentanoate + CO2 + H2O. Its pathway is carbohydrate acid metabolism; D-glucarate degradation; 2,5-dioxopentanoate from D-glucarate: step 2/2. In Paracidovorax citrulli (strain AAC00-1) (Acidovorax citrulli), this protein is Probable 5-dehydro-4-deoxyglucarate dehydratase.